We begin with the raw amino-acid sequence, 480 residues long: O-acyltransferase ausP (480 aa).

Active-site proton acceptor residues include histidine 180 and aspartate 412.

The protein belongs to the plant acyltransferase family. In terms of assembly, monomer.

Its pathway is secondary metabolite biosynthesis; terpenoid biosynthesis. Its function is as follows. O-acyltransferase; part of the gene cluster that mediates the biosynthesis of calidodehydroaustin, a fungal meroterpenoid. The first step of the pathway is the synthesis of 3,5-dimethylorsellinic acid by the polyketide synthase ausA. 3,5-dimethylorsellinic acid is then prenylated by the polyprenyl transferase ausN. Further epoxidation by the FAD-dependent monooxygenase ausM and cyclization by the probable terpene cyclase ausL lead to the formation of protoaustinoid A. Protoaustinoid A is then oxidized to spiro-lactone preaustinoid A3 by the combined action of the FAD-binding monooxygenases ausB and ausC, and the dioxygenase ausE. Acid-catalyzed keto-rearrangement and ring contraction of the tetraketide portion of preaustinoid A3 by ausJ lead to the formation of preaustinoid A4. The aldo-keto reductase ausK, with the help of ausH, is involved in the next step by transforming preaustinoid A4 into isoaustinone which is in turn hydroxylated by the P450 monooxygenase ausI to form austinolide. The cytochrome P450 monooxygenase ausG modifies austinolide to austinol. Austinol is further acetylated to austin by the O-acetyltransferase ausP, which spontaneously changes to dehydroaustin. The cytochrome P450 monooxygenase ausR then converts dehydroaustin is into 7-dehydrodehydroaustin. The hydroxylation catalyzed by ausR permits the O-acetyltransferase ausQ to add an additional acetyl group to the molecule, leading to the formation of acetoxydehydroaustin. The short chain dehydrogenase ausT catalyzes the reduction of the double bond present between carbon atoms 1 and 2 to convert 7-dehydrodehydroaustin into 1,2-dihydro-7-hydroxydehydroaustin. AusQ catalyzes not only an acetylation reaction but also the addition of the PKS ausV diketide product to 1,2-dihydro-7-hydroxydehydroaustin, forming precalidodehydroaustin. Finally, the iron/alpha-ketoglutarate-dependent dioxygenase converts precalidodehydroaustin into calidodehydroaustin. This chain is O-acyltransferase ausP, found in Aspergillus calidoustus.